A 549-amino-acid chain; its full sequence is Maturase K (549 aa).

The protein belongs to the intron maturase 2 family. MatK subfamily.

It localises to the plastid. Its subcellular location is the chloroplast. Its function is as follows. Usually encoded in the trnK tRNA gene intron. Probably assists in splicing its own and other chloroplast group II introns. The polypeptide is Maturase K (Albidella oligococca (Caldesia oligococca)).